We begin with the raw amino-acid sequence, 442 residues long: Ribulose bisphosphate carboxylase/oxygenase activase 1, chloroplastic (442 aa).

A chloroplast-targeting transit peptide spans M1–V58. G169 to S176 is an ATP binding site.

This sequence belongs to the RuBisCO activase family.

It is found in the plastid. The protein resides in the chloroplast stroma. Activation of RuBisCO (ribulose-1,5-bisphosphate carboxylase/oxygenase; EC 4.1.1.39) involves the ATP-dependent carboxylation of the epsilon-amino group of lysine leading to a carbamate structure. This is Ribulose bisphosphate carboxylase/oxygenase activase 1, chloroplastic from Nicotiana tabacum (Common tobacco).